A 593-amino-acid polypeptide reads, in one-letter code: NADH-quinone oxidoreductase subunit C/D (593 aa).

The NADH dehydrogenase I subunit C stretch occupies residues 1–184 (MTADSALYIP…DPYSLSAAKQ (184 aa)). The tract at residues 208 to 593 (DYMFLNLGPN…IDFVMADVDR (386 aa)) is NADH dehydrogenase I subunit D.

The protein in the N-terminal section; belongs to the complex I 30 kDa subunit family. It in the C-terminal section; belongs to the complex I 49 kDa subunit family. As to quaternary structure, NDH-1 is composed of 13 different subunits. Subunits NuoB, CD, E, F, and G constitute the peripheral sector of the complex.

It localises to the cell inner membrane. The catalysed reaction is a quinone + NADH + 5 H(+)(in) = a quinol + NAD(+) + 4 H(+)(out). Its function is as follows. NDH-1 shuttles electrons from NADH, via FMN and iron-sulfur (Fe-S) centers, to quinones in the respiratory chain. The immediate electron acceptor for the enzyme in this species is believed to be ubiquinone. Couples the redox reaction to proton translocation (for every two electrons transferred, four hydrogen ions are translocated across the cytoplasmic membrane), and thus conserves the redox energy in a proton gradient. This is NADH-quinone oxidoreductase subunit C/D from Pseudomonas aeruginosa (strain UCBPP-PA14).